The following is a 297-amino-acid chain: Homoserine kinase (297 aa).

Residue 84–94 (PLSKGFGSSAA) coordinates ATP.

The protein belongs to the GHMP kinase family. Homoserine kinase subfamily.

The protein localises to the cytoplasm. It catalyses the reaction L-homoserine + ATP = O-phospho-L-homoserine + ADP + H(+). Its pathway is amino-acid biosynthesis; L-threonine biosynthesis; L-threonine from L-aspartate: step 4/5. In terms of biological role, catalyzes the ATP-dependent phosphorylation of L-homoserine to L-homoserine phosphate. The sequence is that of Homoserine kinase from Shouchella clausii (strain KSM-K16) (Alkalihalobacillus clausii).